We begin with the raw amino-acid sequence, 631 residues long: BTB/POZ domain-containing protein At1g67900 (631 aa).

The BTB domain maps to 28–93 (SDFTIEVSGS…CYGITITISA (66 aa)). The region spanning 200–509 (GWWAEDIAEL…VQVLFYEQAR (310 aa)) is the NPH3 domain. A disordered region spans residues 361 to 399 (QTSPPTSPLRGKKGMMDRRRRSRSAENIDLEFQESRRSS). A compositionally biased stretch (basic residues) spans 370 to 382 (RGKKGMMDRRRRS). At Y450 the chain carries Phosphotyrosine. Phosphoserine is present on S567.

This sequence belongs to the NPH3 family.

Its pathway is protein modification; protein ubiquitination. Its function is as follows. May act as a substrate-specific adapter of an E3 ubiquitin-protein ligase complex (CUL3-RBX1-BTB) which mediates the ubiquitination and subsequent proteasomal degradation of target proteins. In Arabidopsis thaliana (Mouse-ear cress), this protein is BTB/POZ domain-containing protein At1g67900.